The chain runs to 352 residues: C-C chemokine receptor type 5 (352 aa).

Over 1–30 the chain is Extracellular; the sequence is MDYQVSSPTYDIDYYTSEPCQKVNVKQIAA. Sulfotyrosine is present on Tyr3. Residues Ser6 and Ser7 are each glycosylated (O-linked (GalNAc...) serine). 3 positions are modified to sulfotyrosine: Tyr10, Tyr14, and Tyr15. 2 cysteine pairs are disulfide-bonded: Cys20–Cys269 and Cys101–Cys178. A helical membrane pass occupies residues 31–58; the sequence is RLLPPLYSLVFIFGFVGNILVVLILINC. Residues 59–68 are Cytoplasmic-facing; the sequence is KRLKSMTDIY. The chain crosses the membrane as a helical span at residues 69-89; sequence LLNLAISDLFFLLTVPFWAHY. The Extracellular portion of the chain corresponds to 90–102; it reads AAAQWDFGNTMCQ. Residues 103–124 traverse the membrane as a helical segment; that stretch reads LLTGLYFIGFFSGIFFIILLTI. At 125-141 the chain is on the cytoplasmic side; sequence DRYLAIVHAVFALKART. Residues 142–166 form a helical membrane-spanning segment; sequence VTFGVVTSVITWVVAVFASLPGIIF. Over 167–198 the chain is Extracellular; it reads TRSQREGLHYTCSSHFPYSQYQFWKNFQTLKI. Residues 199–218 traverse the membrane as a helical segment; that stretch reads VILGLVLPLLVMVICYSGIL. Residues 219–235 lie on the Cytoplasmic side of the membrane; the sequence is KTLLRCRNEKKRHRAVR. Residues 236–260 traverse the membrane as a helical segment; it reads LIFTIMIVYFLFWAPYNIVLLLNTF. Topologically, residues 261 to 277 are extracellular; that stretch reads QEFFGLNNCSSSNRLDQ. A helical membrane pass occupies residues 278–301; it reads AMQVTETLGMTHCCINPIIYAFVG. Residues 302–352 are Cytoplasmic-facing; the sequence is EKFRNYLLVFFQKHIAKRFCKCCSIFQQEAPERASSVYTRSTGEQEISVGL. S-palmitoyl cysteine attachment occurs at residues Cys321, Cys323, and Cys324. Phosphoserine; by BARK1 occurs at positions 336, 337, 342, and 349.

Belongs to the G-protein coupled receptor 1 family. In terms of assembly, interacts with PRAF2. Efficient ligand binding to CCL3/MIP-1alpha and CCL4/MIP-1beta requires sulfation, O-glycosylation and sialic acid modifications. Glycosylation on Ser-6 is required for efficient binding of CCL4. Interacts with GRK2. Interacts with ARRB1 and ARRB2. Interacts with CNIH4. Interacts with S100A4; this interaction stimulates T-lymphocyte chemotaxis. Sulfated on at least 2 of the N-terminal tyrosines. Sulfation is required for efficient binding of the chemokines, CCL3 and CCL4. Post-translationally, palmitoylation in the C-terminal is important for cell surface expression. In terms of processing, phosphorylation on serine residues in the C-terminal is stimulated by binding CC chemokines especially by APO-RANTES. O-glycosylated, but not N-glycosylated. Ser-6 appears to be the major site even if Ser-7 may be also O-glycosylated. Also sialylated glycans present which contribute to chemokine binding. Thr-16 and Ser-17 may also be glycosylated and, if so, with small moieties such as a T-antigen.

The protein resides in the cell membrane. Its function is as follows. Receptor for a number of inflammatory CC-chemokines including CCL3/MIP-1-alpha, CCL4/MIP-1-beta and RANTES and subsequently transduces a signal by increasing the intracellular calcium ion level. May play a role in the control of granulocytic lineage proliferation or differentiation. Participates in T-lymphocyte migration to the infection site by acting as a chemotactic receptor. The polypeptide is C-C chemokine receptor type 5 (CCR5) (Semnopithecus entellus (Northern plains gray langur)).